We begin with the raw amino-acid sequence, 337 residues long: Beta-ketoacyl-[acyl-carrier-protein] synthase III (337 aa).

Active-site residues include cysteine 119 and histidine 260. Positions glutamine 261–arginine 265 are ACP-binding. Asparagine 290 is a catalytic residue.

Belongs to the thiolase-like superfamily. FabH family. Homodimer.

The protein localises to the cytoplasm. It catalyses the reaction malonyl-[ACP] + acetyl-CoA + H(+) = 3-oxobutanoyl-[ACP] + CO2 + CoA. It participates in lipid metabolism; fatty acid biosynthesis. In terms of biological role, catalyzes the condensation reaction of fatty acid synthesis by the addition to an acyl acceptor of two carbons from malonyl-ACP. Catalyzes the first condensation reaction which initiates fatty acid synthesis and may therefore play a role in governing the total rate of fatty acid production. Possesses both acetoacetyl-ACP synthase and acetyl transacylase activities. Its substrate specificity determines the biosynthesis of branched-chain and/or straight-chain of fatty acids. The chain is Beta-ketoacyl-[acyl-carrier-protein] synthase III from Synechococcus sp. (strain WH7803).